A 609-amino-acid chain; its full sequence is Membrane-bound O-acyltransferase GUP2 (609 aa).

The signal sequence occupies residues 1 to 18 (MSMLRIWSCIVHFFSVQA). Over 19 to 75 (LDSRIKPDIEFKRRQRIFINSSKEENGSSSSAVTVTRNPVLSSNSPSPPLWNTWEFR) the chain is Lumenal. A helical membrane pass occupies residues 76-96 (LYYLAFTVVVPFMIKAALATS). Over 97–133 (SESNPNYYKFSGLLAHGWILGRKVDNSDPQYRFFRSN) the chain is Cytoplasmic. The helical transmembrane segment at 134–154 (FFLLAILILLQIILKKVFVKF) threads the bilayer. At 155-169 (SKIPKTKFDFACGLV) the chain is on the lumenal side. The helical transmembrane segment at 170–190 (FVCFMYGINSVKLFTHAFIFF) threads the bilayer. Over 191-200 (TLAHSLKRKR) the chain is Cytoplasmic. Residues 201–221 (LIAAFAIWSYGIFTLFINQKM) traverse the membrane as a helical segment. Residues 222-324 (KNLPFNNIAI…VAEHHIQDYN (103 aa)) lie on the Lumenal side of the membrane. A helical membrane pass occupies residues 325–345 (FINFIAYITYAPLFLVGPIIT). Residues 346-371 (FNDYLYQSENKLPSLTKKNIGFYALK) lie on the Cytoplasmic side of the membrane. The chain crosses the membrane as a helical span at residues 372 to 392 (VFSSLLLMEIILHYIYVGAIA). Residues 393-406 (RTKAWNNDTPLQQA) lie on the Lumenal side of the membrane. A helical transmembrane segment spans residues 407 to 427 (MIALFNLNIMYLKLLIPWRLF). Residues 428-474 (RLWAMVDGIDAPENMLRCVDNNYSTVGFWRAWHTSFNKWVIRYIYVP) are Cytoplasmic-facing. Residues 475 to 495 (FGGSNNKILTSFAVFSFVAIW) traverse the membrane as a helical segment. Residue histidine 496 is part of the active site. The Lumenal segment spans residues 496 to 502 (HDIQLRV). The chain crosses the membrane as a helical span at residues 503–523 (LFWGWLTVLLLLGETYITNCF). Topologically, residues 524 to 533 (SRYRFRSWYR) are cytoplasmic. Residues 534 to 554 (FVCGIGAAINICMMMIINVYG) form a helical membrane-spanning segment. Residues 555-575 (FCLGAEGTKLLLKGIFNNSHS) lie on the Lumenal side of the membrane. The helical transmembrane segment at 576–596 (PEFLTAVMVSLFIAVQVMFEI) threads the bilayer. Residues 597–609 (REEEKRHGINLKC) are Cytoplasmic-facing.

The protein belongs to the membrane-bound acyltransferase family.

Its subcellular location is the endoplasmic reticulum membrane. Probable membrane-bound O-acyltransferase. Together with GUP1, has an influence on the chemical composition of the yeast extracellular matrix (yECM) in yeast multicellular aggregates, such as biofilms and colonies. This Saccharomyces cerevisiae (strain ATCC 204508 / S288c) (Baker's yeast) protein is Membrane-bound O-acyltransferase GUP2 (GUP2).